We begin with the raw amino-acid sequence, 341 residues long: Glycerol-3-phosphate dehydrogenase [NAD(P)+] (341 aa).

NADPH is bound by residues Ser-14, Phe-15, Arg-35, and Lys-108. Sn-glycerol 3-phosphate is bound by residues Lys-108 and Gly-136. Residue Ala-140 participates in NADPH binding. Residues Lys-191, Asp-244, Ser-254, Arg-255, and Asn-256 each coordinate sn-glycerol 3-phosphate. Lys-191 (proton acceptor) is an active-site residue. Arg-255 provides a ligand contact to NADPH. Positions 279 and 281 each coordinate NADPH.

It belongs to the NAD-dependent glycerol-3-phosphate dehydrogenase family.

It is found in the cytoplasm. The catalysed reaction is sn-glycerol 3-phosphate + NAD(+) = dihydroxyacetone phosphate + NADH + H(+). It catalyses the reaction sn-glycerol 3-phosphate + NADP(+) = dihydroxyacetone phosphate + NADPH + H(+). Its pathway is membrane lipid metabolism; glycerophospholipid metabolism. Its function is as follows. Catalyzes the reduction of the glycolytic intermediate dihydroxyacetone phosphate (DHAP) to sn-glycerol 3-phosphate (G3P), the key precursor for phospholipid synthesis. This Pseudomonas putida (strain ATCC 47054 / DSM 6125 / CFBP 8728 / NCIMB 11950 / KT2440) protein is Glycerol-3-phosphate dehydrogenase [NAD(P)+].